The chain runs to 448 residues: Exodeoxyribonuclease 7 large subunit (448 aa).

This sequence belongs to the XseA family. As to quaternary structure, heterooligomer composed of large and small subunits.

The protein resides in the cytoplasm. The enzyme catalyses Exonucleolytic cleavage in either 5'- to 3'- or 3'- to 5'-direction to yield nucleoside 5'-phosphates.. Bidirectionally degrades single-stranded DNA into large acid-insoluble oligonucleotides, which are then degraded further into small acid-soluble oligonucleotides. The chain is Exodeoxyribonuclease 7 large subunit from Shewanella baltica (strain OS195).